A 708-amino-acid chain; its full sequence is Outer capsid protein mu-1 (708 aa).

Residue G2 is the site of N-myristoyl glycine; by host attachment. N-linked (GlcNAc...) asparagine; by host glycosylation is found at N3, N12, N81, N110, N458, N482, N528, and N659. The disordered stretch occupies residues 675–708 (PKPDCPTSGDSGESSNRRVKRDSYAGVVKRGYTR).

The protein belongs to the orthoreovirus mu-1 protein family. In terms of assembly, heterohexamer of three sigma-3 and three Mu-1 proteins. Cleaved during the endosomal proteolytic disassembly of the outer capsid. Mu-1 is proteolytically cleaved into mu-1N and mu-1C during the maturation step to generate the ISVP. Cleavage of mu-1 to mu-1C is dependent on myristoylation and binding to sigma-3 protein. Mu-1C is further cleaved into delta (59 kDa), and phi (13 kDa) segments during entry into the host cell cytoplasm. In terms of processing, mu-1 and mu-1N are N-terminally myristoylated. This acylation is essential for the membrane fusion activity.

It localises to the virion. Its subcellular location is the host cell membrane. It is found in the host endoplasmic reticulum. The protein resides in the host mitochondrion. Major outer capsid protein involved in host cell membrane penetration. In the endocytic compartment, outer-capsid protein sigma-3 is removed by cathepsin proteases, which exposes the viral membrane-penetration protein mu-1. Both myristoylated peptides mu-1N and phi are released during infectious subvirion particles (ISVP) formation in the endosome. They associate with host membranes and mu-1N induces permeabilization and delivery of transcriptionally active viral particles into the host cell cytoplasm. Seems to induce apoptosis in the host cell. In terms of biological role, the viral outer shell polypeptides, of which mu-1 is one, impose structural constraints that prevent elongation of nascent transcripts by the RNA-dependent RNA polymerase lambda-3. This Mammalia (T3D) protein is Outer capsid protein mu-1 (M2).